The sequence spans 328 residues: Nucleotide-binding protein Blon_1085/BLIJ_1109 (328 aa).

Positions M1–P33 are disordered. The span at A13 to P29 shows a compositional bias: low complexity. G46 to S53 serves as a coordination point for ATP. Residue D101 to S104 participates in GTP binding.

It belongs to the RapZ-like family.

In terms of biological role, displays ATPase and GTPase activities. The chain is Nucleotide-binding protein Blon_1085/BLIJ_1109 from Bifidobacterium longum subsp. infantis (strain ATCC 15697 / DSM 20088 / JCM 1222 / NCTC 11817 / S12).